The chain runs to 350 residues: Methionine import ATP-binding protein MetN (350 aa).

The 240-residue stretch at Ile2–Val241 folds into the ABC transporter domain. An ATP-binding site is contributed by Gly38–Ser45.

It belongs to the ABC transporter superfamily. Methionine importer (TC 3.A.1.24) family. The complex is composed of two ATP-binding proteins (MetN), two transmembrane proteins (MetI) and a solute-binding protein (MetQ).

It localises to the cell inner membrane. The enzyme catalyses L-methionine(out) + ATP + H2O = L-methionine(in) + ADP + phosphate + H(+). It catalyses the reaction D-methionine(out) + ATP + H2O = D-methionine(in) + ADP + phosphate + H(+). In terms of biological role, part of the ABC transporter complex MetNIQ involved in methionine import. Responsible for energy coupling to the transport system. The sequence is that of Methionine import ATP-binding protein MetN from Francisella tularensis subsp. tularensis (strain SCHU S4 / Schu 4).